The sequence spans 273 residues: Phosphatidylglycerol--prolipoprotein diacylglyceryl transferase (273 aa).

The next 4 membrane-spanning stretches (helical) occupy residues 18–38 (IPVR…YVVG), 47–67 (LPED…IICA), 89–109 (IWNG…TAYI), and 116–136 (VSFL…QIIG). Arg-137 is an a 1,2-diacyl-sn-glycero-3-phospho-(1'-sn-glycerol) binding site. Transmembrane regions (helical) follow at residues 178-198 (VHPT…ILLI), 207-227 (GEIF…IEGM), and 238-258 (LRSA…AIIY).

It belongs to the Lgt family.

It localises to the cell membrane. It carries out the reaction L-cysteinyl-[prolipoprotein] + a 1,2-diacyl-sn-glycero-3-phospho-(1'-sn-glycerol) = an S-1,2-diacyl-sn-glyceryl-L-cysteinyl-[prolipoprotein] + sn-glycerol 1-phosphate + H(+). The protein operates within protein modification; lipoprotein biosynthesis (diacylglyceryl transfer). Functionally, catalyzes the transfer of the diacylglyceryl group from phosphatidylglycerol to the sulfhydryl group of the N-terminal cysteine of a prolipoprotein, the first step in the formation of mature lipoproteins. In Lysinibacillus sphaericus (strain C3-41), this protein is Phosphatidylglycerol--prolipoprotein diacylglyceryl transferase.